Consider the following 123-residue polypeptide: Large ribosomal subunit protein uL14c (123 aa).

The protein belongs to the universal ribosomal protein uL14 family. Part of the 50S ribosomal subunit.

Its subcellular location is the plastid. It is found in the chloroplast. Functionally, binds to 23S rRNA. This is Large ribosomal subunit protein uL14c from Lolium perenne (Perennial ryegrass).